The sequence spans 593 residues: Phosphoinositide phosphatase SAC6 (593 aa).

In terms of domain architecture, SAC spans Leu-128–Gly-456. A Phosphatase catalytic core motif is present at residues Arg-391 to Asn-402. 2 consecutive transmembrane segments (helical) span residues Ala-526 to Met-546 and Tyr-555 to Val-575.

Predominantly expressed in flowers.

Its subcellular location is the endoplasmic reticulum membrane. Functionally, phosphoinositide phosphatase that hydrolyzes PtdIns(3)P and PtdIns(4)P. Involved in priming for different defense responses. This Arabidopsis thaliana (Mouse-ear cress) protein is Phosphoinositide phosphatase SAC6 (SAC6).